The primary structure comprises 518 residues: OTU domain-containing protein 5 (518 aa).

Disordered regions lie at residues 1–79 (MTIL…SGGA) and 105–144 (PGHS…ETAA). The span at 39–53 (SSPPPRWAYPGNPAP) shows a compositional bias: pro residues. Residues 116-125 (SAGPGAPGSS) show a composition bias toward low complexity. Positions 171 to 294 (FIIKQMKEDG…NIHYNSVVNP (124 aa)) constitute an OTU domain. The interval 176–182 (MKEDGAC) is cys-loop. The active site involves D179. C182 acts as the Nucleophile in catalysis. Residues 231 to 241 (KRKNNCHGNHI) form a variable-loop region. The tract at residues 282 to 287 (YHRNIH) is his-loop. H287 is an active-site residue. A disordered region spans residues 371-450 (ARQPRKASAT…GPSNQTCAGA (80 aa)). Over residues 377–390 (ASATCSSATAAASS) the composition is skewed to low complexity.

This sequence belongs to the peptidase C85 family.

It carries out the reaction Thiol-dependent hydrolysis of ester, thioester, amide, peptide and isopeptide bonds formed by the C-terminal Gly of ubiquitin (a 76-residue protein attached to proteins as an intracellular targeting signal).. Its function is as follows. Deubiquitinating enzyme that may function as negative regulator of the innate immune system. Has peptidase activity towards 'Lys-48'- and 'Lys-63'-linked polyubiquitin chains. Can also cleave 'Lys-11'-linked ubiquitin chains (in vitro). This Xenopus tropicalis (Western clawed frog) protein is OTU domain-containing protein 5 (otud5).